The following is a 208-amino-acid chain: CASP-like protein 2U9 (208 aa).

Residues 1-27 (MGVADAPSPGNVPVLGDMKNRSAAEMK) are Cytoplasmic-facing. A helical transmembrane segment spans residues 28-48 (ISVLALRALTLVLLVIALALM). The Extracellular segment spans residues 49–87 (VSNKQTQSIPIKLPGMASTIFLKKTATFSQITGVQYYVG). Residues 88 to 108 (ALSVAVAYMFFQMLAGLFTIL) traverse the membrane as a helical segment. The Cytoplasmic portion of the chain corresponds to 109 to 120 (TTGSIVGSKSRA). Residues 121 to 141 (WVTFILDQLIAYLMVSAATVV) traverse the membrane as a helical segment. At 142 to 168 (AEVGYIARRGETKVGWNQVCSDFKHYC) the chain is on the extracellular side. Residues 169-189 (FIYGFSLVNAFLATIAFLPVV) form a helical membrane-spanning segment. Topologically, residues 190–208 (AVSAFHLFRMYGAQSAQSK) are cytoplasmic.

It belongs to the Casparian strip membrane proteins (CASP) family. Homodimer and heterodimers.

The protein localises to the cell membrane. The protein is CASP-like protein 2U9 of Selaginella moellendorffii (Spikemoss).